A 517-amino-acid polypeptide reads, in one-letter code: Squalene epoxidase 6 (517 aa).

Transmembrane regions (helical) follow at residues 3–23 and 45–65; these read FTHVCLWTLVAFVLTWTVFYL and AADVIIVGAGVGGSALAYALA. FAD-binding positions include 55-56, 75-76, Arg83, Phe88, Arg156, Val172, Asp336, and Met349; these read VG and ER. A helical transmembrane segment spans residues 447–467; sequence LVYHLCAITLSSIGQLLSPFP.

Belongs to the squalene monooxygenase family. FAD is required as a cofactor. In terms of tissue distribution, expressed in seedlings, leaves, stems, inflorescences and siliques.

Its subcellular location is the membrane. It catalyses the reaction squalene + reduced [NADPH--hemoprotein reductase] + O2 = (S)-2,3-epoxysqualene + oxidized [NADPH--hemoprotein reductase] + H2O + H(+). The protein operates within terpene metabolism; lanosterol biosynthesis; lanosterol from farnesyl diphosphate: step 2/3. Functionally, catalyzes the stereospecific oxidation of squalene to (S)-2,3-epoxysqualene, and is considered to be a rate-limiting enzyme in steroid biosynthesis. The chain is Squalene epoxidase 6 (SQE6) from Arabidopsis thaliana (Mouse-ear cress).